Reading from the N-terminus, the 380-residue chain is Queuine tRNA-ribosyltransferase (380 aa).

Catalysis depends on Asp-96, which acts as the Proton acceptor. Substrate-binding positions include 96–100 (DSGGF), Asp-150, Gln-193, and Gly-220. Residues 251-257 (GVGAPDS) are RNA binding. Asp-270 serves as the catalytic Nucleophile. An RNA binding; important for wobble base 34 recognition region spans residues 275–279 (TRIAR). Zn(2+) contacts are provided by Cys-308, Cys-310, Cys-313, and His-339.

This sequence belongs to the queuine tRNA-ribosyltransferase family. Homodimer. Within each dimer, one monomer is responsible for RNA recognition and catalysis, while the other monomer binds to the replacement base PreQ1. Zn(2+) is required as a cofactor.

The enzyme catalyses 7-aminomethyl-7-carbaguanine + guanosine(34) in tRNA = 7-aminomethyl-7-carbaguanosine(34) in tRNA + guanine. The protein operates within tRNA modification; tRNA-queuosine biosynthesis. Catalyzes the base-exchange of a guanine (G) residue with the queuine precursor 7-aminomethyl-7-deazaguanine (PreQ1) at position 34 (anticodon wobble position) in tRNAs with GU(N) anticodons (tRNA-Asp, -Asn, -His and -Tyr). Catalysis occurs through a double-displacement mechanism. The nucleophile active site attacks the C1' of nucleotide 34 to detach the guanine base from the RNA, forming a covalent enzyme-RNA intermediate. The proton acceptor active site deprotonates the incoming PreQ1, allowing a nucleophilic attack on the C1' of the ribose to form the product. After dissociation, two additional enzymatic reactions on the tRNA convert PreQ1 to queuine (Q), resulting in the hypermodified nucleoside queuosine (7-(((4,5-cis-dihydroxy-2-cyclopenten-1-yl)amino)methyl)-7-deazaguanosine). This is Queuine tRNA-ribosyltransferase from Streptococcus pneumoniae (strain P1031).